Here is a 459-residue protein sequence, read N- to C-terminus: uncharacterized protein (459 aa).

Residues 2 to 60 form the TRAM domain; it reads NLRVKQKIPLKIKRMGINGEGIGFYKRTLVFVPGALKGEEIFCQITSVKHNFVQARLLT. [4Fe-4S] cluster is bound by residues C73, C79, C82, and C162. S-adenosyl-L-methionine-binding residues include Q284, Y313, D334, and D382. Catalysis depends on C409, which acts as the Nucleophile.

This sequence belongs to the class I-like SAM-binding methyltransferase superfamily. RNA M5U methyltransferase family.

This is an uncharacterized protein from Streptococcus mutans serotype c (strain ATCC 700610 / UA159).